The chain runs to 306 residues: D-alanine--D-alanine ligase (306 aa).

The region spanning 107-300 (KEAYRAAGLP…FGQLCAWMVE (194 aa)) is the ATP-grasp domain. 134–184 (MQPPYVVKPYNEGSSVGVYIVTEAANGPPVLAPDLPATLMVEEYVPGRELS) contacts ATP. Mg(2+) is bound by residues aspartate 251, glutamate 267, and asparagine 269.

Belongs to the D-alanine--D-alanine ligase family. Mg(2+) serves as cofactor. Requires Mn(2+) as cofactor.

Its subcellular location is the cytoplasm. It catalyses the reaction 2 D-alanine + ATP = D-alanyl-D-alanine + ADP + phosphate + H(+). Its pathway is cell wall biogenesis; peptidoglycan biosynthesis. Functionally, cell wall formation. This Ruegeria pomeroyi (strain ATCC 700808 / DSM 15171 / DSS-3) (Silicibacter pomeroyi) protein is D-alanine--D-alanine ligase.